The primary structure comprises 68 residues: Protein SlyX homolog (68 aa).

The protein belongs to the SlyX family.

This chain is Protein SlyX homolog, found in Brucella anthropi (strain ATCC 49188 / DSM 6882 / CCUG 24695 / JCM 21032 / LMG 3331 / NBRC 15819 / NCTC 12168 / Alc 37) (Ochrobactrum anthropi).